The sequence spans 83 residues: Protein CASPARIAN STRIP INTEGRITY FACTOR 1 (83 aa).

Residues 1–22 (MGMSPLTVKKLGFIFMIVSASA) form the signal peptide. A disordered region spans residues 59-83 (MNTKDYGNNSPSPRLERPPFKLIPN). Sulfotyrosine is present on Tyr64. A hydroxyproline mark is found at Pro69 and Pro71.

Interacts with the specific receptor kinases GSO1 and GSO2. As to expression, expressed exclusively in the root stele.

Its function is as follows. Peptide hormone required for contiguous Casparian strip diffusion barrier formation in roots via the regulation of CASPs protein expression and distribution in a GSO1-GSO2 signaling pathway. The Casparian strip is required for ion homeostasis (e.g. iron and potassium ions). This Arabidopsis thaliana (Mouse-ear cress) protein is Protein CASPARIAN STRIP INTEGRITY FACTOR 1.